The primary structure comprises 20 residues: Pregnancy-associated glycoprotein 57 (20 aa).

This sequence belongs to the peptidase A1 family. Glycosylated.

It localises to the secreted. The protein is Pregnancy-associated glycoprotein 57 of Ovis aries (Sheep).